Consider the following 361-residue polypeptide: Chorismate synthase (361 aa).

R48 and R54 together coordinate NADP(+). FMN-binding positions include 125 to 127 (RSS), 238 to 239 (NA), G278, 293 to 297 (KPTSS), and R319.

The protein belongs to the chorismate synthase family. In terms of assembly, homotetramer. FMNH2 is required as a cofactor.

It catalyses the reaction 5-O-(1-carboxyvinyl)-3-phosphoshikimate = chorismate + phosphate. It functions in the pathway metabolic intermediate biosynthesis; chorismate biosynthesis; chorismate from D-erythrose 4-phosphate and phosphoenolpyruvate: step 7/7. Its function is as follows. Catalyzes the anti-1,4-elimination of the C-3 phosphate and the C-6 proR hydrogen from 5-enolpyruvylshikimate-3-phosphate (EPSP) to yield chorismate, which is the branch point compound that serves as the starting substrate for the three terminal pathways of aromatic amino acid biosynthesis. This reaction introduces a second double bond into the aromatic ring system. The sequence is that of Chorismate synthase from Yersinia pseudotuberculosis serotype IB (strain PB1/+).